The primary structure comprises 208 residues: V-type ATP synthase subunit D (208 aa).

It belongs to the V-ATPase D subunit family.

In terms of biological role, produces ATP from ADP in the presence of a proton gradient across the membrane. This Chlamydia felis (strain Fe/C-56) (Chlamydophila felis) protein is V-type ATP synthase subunit D.